We begin with the raw amino-acid sequence, 455 residues long: Probable glycine dehydrogenase (decarboxylating) subunit 1 (455 aa).

Belongs to the GcvP family. N-terminal subunit subfamily. As to quaternary structure, the glycine cleavage system is composed of four proteins: P, T, L and H. In this organism, the P 'protein' is a heterodimer of two subunits.

The catalysed reaction is N(6)-[(R)-lipoyl]-L-lysyl-[glycine-cleavage complex H protein] + glycine + H(+) = N(6)-[(R)-S(8)-aminomethyldihydrolipoyl]-L-lysyl-[glycine-cleavage complex H protein] + CO2. The glycine cleavage system catalyzes the degradation of glycine. The P protein binds the alpha-amino group of glycine through its pyridoxal phosphate cofactor; CO(2) is released and the remaining methylamine moiety is then transferred to the lipoamide cofactor of the H protein. The protein is Probable glycine dehydrogenase (decarboxylating) subunit 1 of Francisella tularensis subsp. holarctica (strain FTNF002-00 / FTA).